The chain runs to 360 residues: Peptide chain release factor 1 (360 aa).

Glutamine 235 is subject to N5-methylglutamine.

The protein belongs to the prokaryotic/mitochondrial release factor family. Post-translationally, methylated by PrmC. Methylation increases the termination efficiency of RF1.

It is found in the cytoplasm. In terms of biological role, peptide chain release factor 1 directs the termination of translation in response to the peptide chain termination codons UAG and UAA. This is Peptide chain release factor 1 from Burkholderia ambifaria (strain MC40-6).